The primary structure comprises 61 residues: UPF0181 protein Ent638_2380 (61 aa).

It belongs to the UPF0181 family.

The protein is UPF0181 protein Ent638_2380 of Enterobacter sp. (strain 638).